The sequence spans 1006 residues: Unconventional myosin-Id (1006 aa).

N-acetylalanine is present on Ala2. Residues 9 to 695 (FGKADFVLMD…TLFTLEELRA (687 aa)) enclose the Myosin motor domain. 102–109 (GESGAGKT) serves as a coordination point for ATP. The residue at position 200 (Ser200) is a Phosphoserine. Tyr536 bears the Phosphotyrosine mark. Positions 572–594 (MIALVDNLASKEPYYVRCIKPND) are actin-binding. IQ domains are found at residues 699-719 (VRVV…MRYK) and 721-741 (TKAA…SYIH). The interval 776–896 (LQSIFNRWRA…MDPTKQYKVM (121 aa)) is interaction with calmodulin. The region spanning 812–1005 (GQRADLGLQR…RSGFILSVPG (194 aa)) is the TH1 domain.

The protein belongs to the TRAFAC class myosin-kinesin ATPase superfamily. Myosin family. In terms of assembly, interacts (via the two IQ motifs) with calmodulin. Binds an additional calmodulin chain via a third, C-terminal region. Interacts with F-actin. Detected on tracheal epithelial cells, and on epithelial cells and brush border cells in duodenum, jejunum and ileum. Detected on myelinated white matter in the cerebellum, and the myelinated part of the optic nerve. Detected on mature oligodendrocites. Detected on the outside of the myelin sheet that surrounds axons (at protein level). Ubiquitous. Highest levels in adult brain, and spinal cord. Moderate levels in lung, kidney, liver and spleen. Low levels in testis and heart (at protein level).

It localises to the cytoplasm. The protein localises to the perikaryon. It is found in the cell projection. Its subcellular location is the dendrite. The protein resides in the early endosome. It localises to the cell cortex. Its function is as follows. Unconventional myosin that functions as actin-based motor protein with ATPase activity. Plays a role in endosomal protein trafficking, and especially in the transfer of cargo proteins from early to recycling endosomes. Required for normal planar cell polarity in ciliated tracheal cells, for normal rotational polarity of cilia, and for coordinated, unidirectional ciliary movement in the trachea. Required for normal, polarized cilia organization in brain ependymal epithelial cells. The protein is Unconventional myosin-Id (Myo1d) of Rattus norvegicus (Rat).